A 1203-amino-acid polypeptide reads, in one-letter code: Cingulin (1203 aa).

Residues 7-357 form a head region; the sequence is MAEPRGPVDH…VMVSSGSTKA (351 aa). Residues 25–48 form a disordered region; sequence EPVSGAEMGTLRRGGRRPAKDARA. The ZIM motif lies at 48 to 62; sequence ASTYGVAVRVQGIAG. The interval 54-67 is interaction with TJP1/ZO1; it reads AVRVQGIAGQPFVV. The interval 89–127 is disordered; it reads GASGALSSDLELPENPYSQVKGFPAPSQSSTSDEEPGAY. 13 positions are modified to phosphoserine: Ser-95, Ser-96, Ser-135, Ser-137, Ser-140, Ser-155, Ser-165, Ser-214, Ser-217, Ser-258, Ser-276, Ser-338, and Ser-351. The tract at residues 186-266 is disordered; sequence DSQLGGQARG…LSPLSGFSRS (81 aa). Residues 207–231 are compositionally biased toward basic and acidic residues; that stretch reads EQRKRSKSLDSRLPRDTFEERERQS. The span at 232 to 266 shows a compositional bias: polar residues; it reads TNHWTSSTKYDNHVGTSKQPAQSQNLSPLSGFSRS. Positions 358 to 1160 form a coiled coil; it reads VAGQGELTRK…SLEKDSWRKA (803 aa). The residue at position 579 (Lys-579) is an N6-acetyllysine. Thr-712 carries the post-translational modification Phosphothreonine. 2 disordered regions span residues 1034-1053 and 1154-1181; these read LASS…LESQ and KDSW…EEFD. A compositionally biased stretch (low complexity) spans 1044 to 1053; it reads SASLSQLESQ. Residues 1161–1203 are tail; that stretch reads SRSAAESALKNEGLSSDEEFDSVYDPSSIASLLTESNLQTSSC. Phosphoserine occurs at positions 1175, 1176, and 1182.

The protein belongs to the cingulin family. In terms of assembly, homodimer. Interacts with TJP1/ZO1. Interacts with SPEF1. Localized on the cytoplasmic face of tight junctions of polarized epithelia and some endothelia. Expressed in pancreas, kidney, liver and lung, but not in skeletal muscle, placenta, brain or heart.

The protein resides in the cell junction. Its subcellular location is the tight junction. In terms of biological role, probably plays a role in the formation and regulation of the tight junction (TJ) paracellular permeability barrier. The sequence is that of Cingulin from Homo sapiens (Human).